We begin with the raw amino-acid sequence, 65 residues long: Large ribosomal subunit protein uL29 (65 aa).

Belongs to the universal ribosomal protein uL29 family.

In Lactobacillus delbrueckii subsp. bulgaricus (strain ATCC 11842 / DSM 20081 / BCRC 10696 / JCM 1002 / NBRC 13953 / NCIMB 11778 / NCTC 12712 / WDCM 00102 / Lb 14), this protein is Large ribosomal subunit protein uL29.